The primary structure comprises 465 residues: Ribulose bisphosphate carboxylase large chain (465 aa).

Lysine 4 carries the post-translational modification N6,N6,N6-trimethyllysine. Residues asparagine 113 and threonine 163 each contribute to the substrate site. The Proton acceptor role is filled by lysine 165. Lysine 167 contacts substrate. Mg(2+) is bound by residues lysine 191, aspartate 193, and glutamate 194. Lysine 191 carries the post-translational modification N6-carboxylysine. The active-site Proton acceptor is histidine 284. Residues arginine 285, histidine 317, and serine 369 each contribute to the substrate site.

The protein belongs to the RuBisCO large chain family. Type I subfamily. Heterohexadecamer of 8 large chains and 8 small chains; disulfide-linked. The disulfide link is formed within the large subunit homodimers. Requires Mg(2+) as cofactor. In terms of processing, the disulfide bond which can form in the large chain dimeric partners within the hexadecamer appears to be associated with oxidative stress and protein turnover.

The protein resides in the plastid. The protein localises to the chloroplast. The enzyme catalyses 2 (2R)-3-phosphoglycerate + 2 H(+) = D-ribulose 1,5-bisphosphate + CO2 + H2O. It catalyses the reaction D-ribulose 1,5-bisphosphate + O2 = 2-phosphoglycolate + (2R)-3-phosphoglycerate + 2 H(+). In terms of biological role, ruBisCO catalyzes two reactions: the carboxylation of D-ribulose 1,5-bisphosphate, the primary event in carbon dioxide fixation, as well as the oxidative fragmentation of the pentose substrate in the photorespiration process. Both reactions occur simultaneously and in competition at the same active site. In Ulmus alata (Winged elm), this protein is Ribulose bisphosphate carboxylase large chain.